The chain runs to 263 residues: Pheophorbidase (263 aa).

Residues 13 to 244 (HFVFVHGASH…LEESDHSAFF (232 aa)) enclose the AB hydrolase-1 domain. The active-site Acyl-ester intermediate is serine 88. Active-site charge relay system residues include aspartate 212 and histidine 240.

Belongs to the AB hydrolase superfamily. In terms of assembly, homodimer.

Its subcellular location is the cytoplasm. It carries out the reaction pheophorbide a + H2O + H(+) = pyropheophorbide a + methanol + CO2. Its activity is regulated as follows. Inhibited by methanol and phenylmethylsulfonicfluoride (PMSF). Functionally, involved in chlorophyll degradation. Specific for the pheophorbides of the dihydroporphyrin and tetrahydroporphyrin types. Chlorophyllide a, pheophytin a and the nonfluorescent chlorophyll catabolite (NCC) are not used as substrates. This Raphanus sativus (Radish) protein is Pheophorbidase (PPD).